The chain runs to 499 residues: Bifunctional purine biosynthesis protein PurH (499 aa).

Residues 1-144 (MIKRALISVF…KNFKDVVVLT (144 aa)) enclose the MGS-like domain.

It belongs to the PurH family.

The catalysed reaction is (6R)-10-formyltetrahydrofolate + 5-amino-1-(5-phospho-beta-D-ribosyl)imidazole-4-carboxamide = 5-formamido-1-(5-phospho-D-ribosyl)imidazole-4-carboxamide + (6S)-5,6,7,8-tetrahydrofolate. It carries out the reaction IMP + H2O = 5-formamido-1-(5-phospho-D-ribosyl)imidazole-4-carboxamide. The protein operates within purine metabolism; IMP biosynthesis via de novo pathway; 5-formamido-1-(5-phospho-D-ribosyl)imidazole-4-carboxamide from 5-amino-1-(5-phospho-D-ribosyl)imidazole-4-carboxamide (10-formyl THF route): step 1/1. It participates in purine metabolism; IMP biosynthesis via de novo pathway; IMP from 5-formamido-1-(5-phospho-D-ribosyl)imidazole-4-carboxamide: step 1/1. This Clostridium botulinum (strain Hall / ATCC 3502 / NCTC 13319 / Type A) protein is Bifunctional purine biosynthesis protein PurH.